We begin with the raw amino-acid sequence, 369 residues long: Transposase for insertion sequence element IS1201 (369 aa).

It belongs to the transposase mutator family.

In terms of biological role, required for the transposition of the insertion element. The chain is Transposase for insertion sequence element IS1201 from Lactobacillus helveticus (Lactobacillus suntoryeus).